We begin with the raw amino-acid sequence, 247 residues long: Carboxy-S-adenosyl-L-methionine synthase (247 aa).

S-adenosyl-L-methionine-binding positions include tyrosine 39, 64 to 66, 89 to 90, 117 to 118, asparagine 132, and arginine 199; these read GCS, DN, and DI.

This sequence belongs to the class I-like SAM-binding methyltransferase superfamily. Cx-SAM synthase family. Homodimer.

It catalyses the reaction prephenate + S-adenosyl-L-methionine = carboxy-S-adenosyl-L-methionine + 3-phenylpyruvate + H2O. Catalyzes the conversion of S-adenosyl-L-methionine (SAM) to carboxy-S-adenosyl-L-methionine (Cx-SAM). The polypeptide is Carboxy-S-adenosyl-L-methionine synthase (Shigella sonnei (strain Ss046)).